We begin with the raw amino-acid sequence, 122 residues long: Large ribosomal subunit protein bL19 (122 aa).

Belongs to the bacterial ribosomal protein bL19 family.

Its function is as follows. This protein is located at the 30S-50S ribosomal subunit interface and may play a role in the structure and function of the aminoacyl-tRNA binding site. The sequence is that of Large ribosomal subunit protein bL19 from Chlamydia felis (strain Fe/C-56) (Chlamydophila felis).